The chain runs to 305 residues: Cytochrome c biogenesis protein CcsA (305 aa).

8 helical membrane passes run 4-24 (VLGL…LAFW), 32-52 (SGLV…QLVL), 58-78 (GHFP…ACTL), 91-111 (IVAA…SFAL), 136-156 (VIMV…AVLV), 212-232 (TITV…VWAN), 246-263 (TWAL…HTRL), and 275-295 (VASA…LLGI).

The protein belongs to the CcmF/CycK/Ccl1/NrfE/CcsA family. May interact with ccs1.

The protein resides in the cellular thylakoid membrane. In terms of biological role, required during biogenesis of c-type cytochromes (cytochrome c6 and cytochrome f) at the step of heme attachment. The polypeptide is Cytochrome c biogenesis protein CcsA (Synechococcus sp. (strain CC9311)).